The sequence spans 234 residues: Large ribosomal subunit protein uL1 (234 aa).

The protein belongs to the universal ribosomal protein uL1 family. As to quaternary structure, part of the 50S ribosomal subunit.

In terms of biological role, binds directly to 23S rRNA. The L1 stalk is quite mobile in the ribosome, and is involved in E site tRNA release. Functionally, protein L1 is also a translational repressor protein, it controls the translation of the L11 operon by binding to its mRNA. In Prochlorococcus marinus (strain SARG / CCMP1375 / SS120), this protein is Large ribosomal subunit protein uL1.